A 126-amino-acid polypeptide reads, in one-letter code: Aspartate 1-decarboxylase (126 aa).

Ser25 functions as the Schiff-base intermediate with substrate; via pyruvic acid in the catalytic mechanism. Ser25 carries the pyruvic acid (Ser) modification. Thr57 provides a ligand contact to substrate. Residue Tyr58 is the Proton donor of the active site. 73–75 is a substrate binding site; that stretch reads GAA.

Belongs to the PanD family. In terms of assembly, heterooctamer of four alpha and four beta subunits. Requires pyruvate as cofactor. In terms of processing, is synthesized initially as an inactive proenzyme, which is activated by self-cleavage at a specific serine bond to produce a beta-subunit with a hydroxyl group at its C-terminus and an alpha-subunit with a pyruvoyl group at its N-terminus.

It localises to the cytoplasm. It catalyses the reaction L-aspartate + H(+) = beta-alanine + CO2. The protein operates within cofactor biosynthesis; (R)-pantothenate biosynthesis; beta-alanine from L-aspartate: step 1/1. Its function is as follows. Catalyzes the pyruvoyl-dependent decarboxylation of aspartate to produce beta-alanine. The chain is Aspartate 1-decarboxylase from Escherichia coli O6:H1 (strain CFT073 / ATCC 700928 / UPEC).